A 413-amino-acid polypeptide reads, in one-letter code: Serine hydroxymethyltransferase (413 aa).

(6S)-5,6,7,8-tetrahydrofolate is bound by residues leucine 117 and 121–123; that span reads GHL. Lysine 226 carries the N6-(pyridoxal phosphate)lysine modification. (6S)-5,6,7,8-tetrahydrofolate contacts are provided by residues glutamate 239 and 349-351; that span reads SPF.

Belongs to the SHMT family. In terms of assembly, homodimer. Requires pyridoxal 5'-phosphate as cofactor.

Its subcellular location is the cytoplasm. The enzyme catalyses (6R)-5,10-methylene-5,6,7,8-tetrahydrofolate + glycine + H2O = (6S)-5,6,7,8-tetrahydrofolate + L-serine. Its pathway is one-carbon metabolism; tetrahydrofolate interconversion. It functions in the pathway amino-acid biosynthesis; glycine biosynthesis; glycine from L-serine: step 1/1. Functionally, catalyzes the reversible interconversion of serine and glycine with tetrahydrofolate (THF) serving as the one-carbon carrier. This reaction serves as the major source of one-carbon groups required for the biosynthesis of purines, thymidylate, methionine, and other important biomolecules. Also exhibits THF-independent aldolase activity toward beta-hydroxyamino acids, producing glycine and aldehydes, via a retro-aldol mechanism. The chain is Serine hydroxymethyltransferase from Bacillus mycoides (strain KBAB4) (Bacillus weihenstephanensis).